The sequence spans 759 residues: Nucleolar RNA helicase 2-A (759 aa).

A disordered region spans residues 1 to 154 (MPVKVYAEEM…KKRKTDTTEI (154 aa)). The span at 77-86 (ETAEECDGEQ) shows a compositional bias: acidic residues. Residues 179-207 (GDFSKFPLSKETIKNLQAKGVSYLFPIQS) carry the Q motif motif. In terms of domain architecture, Helicase ATP-binding spans 210–389 (FHTAYSGKDV…KKYMRKQFEK (180 aa)). 223–230 (ARTGTGKT) contacts ATP. A DEAD box motif is present at residues 332 to 335 (DEVD). The region spanning 422–566 (DLVQVYSGSH…VGVPSLLNVA (145 aa)) is the Helicase C-terminal domain. The disordered stretch occupies residues 709 to 759 (QESERNFDGPRNRGFGGRGRRPFDRRNNSRNSNRGGGGRGRNRNGGFRRGR). Residues 710–719 (ESERNFDGPR) show a composition bias toward basic and acidic residues. Positions 748-759 (GRNRNGGFRRGR) are enriched in basic residues.

This sequence belongs to the DEAD box helicase family. DDX21/DDX50 subfamily. In terms of tissue distribution, widely expressed. Expressed at higher level in stomach. Expressed at higher level compared to ddx21-b.

Its subcellular location is the nucleus. The protein resides in the nucleolus. It localises to the nucleoplasm. The protein localises to the cytoplasm. It is found in the cytosol. Its subcellular location is the mitochondrion. It catalyses the reaction ATP + H2O = ADP + phosphate + H(+). Its function is as follows. RNA helicase that acts as a sensor of the transcriptional status of both RNA polymerase (Pol) I and II: promotes ribosomal RNA (rRNA) processing and transcription from polymerase II (Pol II). Binds various RNAs, such as rRNAs, snoRNAs, 7SK and, at lower extent, mRNAs. In the nucleolus, localizes to rDNA locus, where it directly binds rRNAs and snoRNAs, and promotes rRNA transcription, processing and modification. Required for rRNA 2'-O-methylation, possibly by promoting the recruitment of late-acting snoRNAs SNORD56 and SNORD58 with pre-ribosomal complexes. In the nucleoplasm, binds 7SK RNA and is recruited to the promoters of Pol II-transcribed genes: acts by facilitating the release of P-TEFb from inhibitory 7SK snRNP in a manner that is dependent on its helicase activity, thereby promoting transcription of its target genes. Required to prevent R-loop-associated DNA damage and transcription-associated genomic instability. The chain is Nucleolar RNA helicase 2-A (ddx21-a) from Xenopus laevis (African clawed frog).